A 375-amino-acid chain; its full sequence is tRNA-specific 2-thiouridylase MnmA (375 aa).

ATP contacts are provided by residues 12-19 (GMSGGVDS) and M38. An interaction with target base in tRNA region spans residues 98-100 (NPD). C103 (nucleophile) is an active-site residue. The cysteines at positions 103 and 200 are disulfide-linked. G127 contributes to the ATP binding site. Positions 150-152 (KDQ) are interaction with tRNA. The active-site Cysteine persulfide intermediate is the C200. The segment at 312 to 313 (RY) is interaction with tRNA.

It belongs to the MnmA/TRMU family.

The protein resides in the cytoplasm. It carries out the reaction S-sulfanyl-L-cysteinyl-[protein] + uridine(34) in tRNA + AH2 + ATP = 2-thiouridine(34) in tRNA + L-cysteinyl-[protein] + A + AMP + diphosphate + H(+). In terms of biological role, catalyzes the 2-thiolation of uridine at the wobble position (U34) of tRNA, leading to the formation of s(2)U34. The protein is tRNA-specific 2-thiouridylase MnmA of Ligilactobacillus salivarius (strain UCC118) (Lactobacillus salivarius).